A 266-amino-acid polypeptide reads, in one-letter code: Glutamate racemase (266 aa).

Residues 9-10 and 41-42 each bind substrate; these read DS and YG. The active-site Proton donor/acceptor is Cys72. 73 to 74 serves as a coordination point for substrate; that stretch reads NT. Cys184 functions as the Proton donor/acceptor in the catalytic mechanism. 185–186 contacts substrate; that stretch reads TH.

The protein belongs to the aspartate/glutamate racemases family.

It carries out the reaction L-glutamate = D-glutamate. The protein operates within cell wall biogenesis; peptidoglycan biosynthesis. Provides the (R)-glutamate required for cell wall biosynthesis. The protein is Glutamate racemase of Staphylococcus aureus (strain bovine RF122 / ET3-1).